The sequence spans 280 residues: uncharacterized protein (280 aa).

3-29 (KKIAIVTGASSGFGLLAAVKLARSFFV) contributes to the NADP(+) binding site. Ser-139 contributes to the substrate binding site. The Proton acceptor role is filled by Tyr-152.

The protein belongs to the short-chain dehydrogenases/reductases (SDR) family.

This is an uncharacterized protein from Bacillus subtilis (strain 168).